Reading from the N-terminus, the 106-residue chain is Thioredoxin (106 aa).

The region spanning 1 to 106 is the Thioredoxin domain; sequence GATVKVTNAT…RLAAFLDASL (106 aa). Residues C31 and C34 are joined by a disulfide bond.

This sequence belongs to the thioredoxin family.

Its function is as follows. Participates in various redox reactions through the reversible oxidation of its active center dithiol to a disulfide and catalyzes dithiol-disulfide exchange reactions. The protein is Thioredoxin (trxA) of Kitasatospora aureofaciens (Streptomyces aureofaciens).